A 475-amino-acid chain; its full sequence is ADP-ribosyltransferase toxin AexT (475 aa).

Residues 93-226 enclose the Bacterial Rho-GAP domain; that stretch reads VSPEDLQRLM…LQRAVKAEVA (134 aa). The TR mART core domain maps to 260 to 436; the sequence is EGLQEQFGLE…RVLEEASLGE (177 aa). Catalysis depends on residues arginine 340, serine 364, and glutamate 403.

The protein localises to the secreted. Directly involved in the toxicity for RTG-2 (rainbow trout gonad) fish cells. This chain is ADP-ribosyltransferase toxin AexT (aexT), found in Aeromonas salmonicida.